A 422-amino-acid chain; its full sequence is Metallocarboxypeptidase A (422 aa).

Positions 1-17 (MRSVLSLALLAANVVTA) are cleaved as a signal peptide. Residues 18-112 (AVVSPFDYSG…FEAYSAGYAP (95 aa)) constitute a propeptide, activation peptide. The 301-residue stretch at 119 to 419 (SYHSYQDHIS…AGTVAMLKAV (301 aa)) folds into the Peptidase M14 domain. Zn(2+) is bound by residues His179 and Glu182. Substrate-binding positions include 179–182 (HARE), Arg237, and 254–255 (NR). Cys248 and Cys271 are oxidised to a cystine. A Zn(2+)-binding site is contributed by His309. 310 to 311 (SY) is a binding site for substrate. Glu385 acts as the Proton donor/acceptor in catalysis.

The protein belongs to the peptidase M14 family. Zn(2+) serves as cofactor.

The protein resides in the secreted. Functionally, extracellular metalloprotease that contributes to pathogenicity. This is Metallocarboxypeptidase A (MCPA) from Trichophyton equinum (Horse ringworm fungus).